Consider the following 340-residue polypeptide: Coproporphyrin III ferrochelatase (340 aa).

The Fe-coproporphyrin III site is built by serine 52 and tyrosine 121. Positions 177 and 260 each coordinate Fe(2+).

The protein belongs to the ferrochelatase family.

The protein resides in the cytoplasm. It catalyses the reaction Fe-coproporphyrin III + 2 H(+) = coproporphyrin III + Fe(2+). It participates in porphyrin-containing compound metabolism; protoheme biosynthesis. In terms of biological role, involved in coproporphyrin-dependent heme b biosynthesis. Catalyzes the insertion of ferrous iron into coproporphyrin III to form Fe-coproporphyrin III. The chain is Coproporphyrin III ferrochelatase from Mycobacteroides abscessus (strain ATCC 19977 / DSM 44196 / CCUG 20993 / CIP 104536 / JCM 13569 / NCTC 13031 / TMC 1543 / L948) (Mycobacterium abscessus).